A 490-amino-acid polypeptide reads, in one-letter code: Bifunctional protein GlmU (490 aa).

The tract at residues 1 to 241 (MSSPGDTAVL…SALVAGVNNR (241 aa)) is pyrophosphorylase. Residues 12–15 (LAAG), lysine 26, glutamine 83, 88–89 (GT), 112–114 (SGD), glycine 151, glutamate 166, asparagine 181, and asparagine 239 each bind UDP-N-acetyl-alpha-D-glucosamine. Mg(2+) is bound at residue aspartate 114. Residue asparagine 239 participates in Mg(2+) binding. The linker stretch occupies residues 242–262 (VQLAQLGAELNRRIVAAHQLA). The N-acetyltransferase stretch occupies residues 263 to 490 (GVTVVDPATT…AGGRPAGEAE (228 aa)). 2 residues coordinate UDP-N-acetyl-alpha-D-glucosamine: arginine 344 and lysine 362. The active-site Proton acceptor is the histidine 374. UDP-N-acetyl-alpha-D-glucosamine-binding residues include tyrosine 377 and asparagine 388. Residues alanine 391, 397 to 398 (NY), serine 416, and alanine 434 each bind acetyl-CoA. The segment at 462-490 (RRKRPGSAAARAAEAAEKAAGGRPAGEAE) is disordered. Low complexity predominate over residues 467–490 (GSAAARAAEAAEKAAGGRPAGEAE).

It in the N-terminal section; belongs to the N-acetylglucosamine-1-phosphate uridyltransferase family. In the C-terminal section; belongs to the transferase hexapeptide repeat family. As to quaternary structure, homotrimer. Mg(2+) is required as a cofactor.

It localises to the cytoplasm. The enzyme catalyses alpha-D-glucosamine 1-phosphate + acetyl-CoA = N-acetyl-alpha-D-glucosamine 1-phosphate + CoA + H(+). The catalysed reaction is N-acetyl-alpha-D-glucosamine 1-phosphate + UTP + H(+) = UDP-N-acetyl-alpha-D-glucosamine + diphosphate. The protein operates within nucleotide-sugar biosynthesis; UDP-N-acetyl-alpha-D-glucosamine biosynthesis; N-acetyl-alpha-D-glucosamine 1-phosphate from alpha-D-glucosamine 6-phosphate (route II): step 2/2. Its pathway is nucleotide-sugar biosynthesis; UDP-N-acetyl-alpha-D-glucosamine biosynthesis; UDP-N-acetyl-alpha-D-glucosamine from N-acetyl-alpha-D-glucosamine 1-phosphate: step 1/1. It participates in bacterial outer membrane biogenesis; LPS lipid A biosynthesis. Catalyzes the last two sequential reactions in the de novo biosynthetic pathway for UDP-N-acetylglucosamine (UDP-GlcNAc). The C-terminal domain catalyzes the transfer of acetyl group from acetyl coenzyme A to glucosamine-1-phosphate (GlcN-1-P) to produce N-acetylglucosamine-1-phosphate (GlcNAc-1-P), which is converted into UDP-GlcNAc by the transfer of uridine 5-monophosphate (from uridine 5-triphosphate), a reaction catalyzed by the N-terminal domain. The sequence is that of Bifunctional protein GlmU from Mycolicibacterium paratuberculosis (strain ATCC BAA-968 / K-10) (Mycobacterium paratuberculosis).